The chain runs to 146 residues: Gonadotropin subunit beta-2 (146 aa).

Residues 1–22 (MTVEISKVFVLMMLNLFLGASS) form the signal peptide. Disulfide bonds link Cys37–Cys85, Cys51–Cys100, Cys54–Cys138, Cys62–Cys116, Cys66–Cys118, and Cys121–Cys128. Asn41 carries N-linked (GlcNAc...) asparagine glycosylation.

This sequence belongs to the glycoprotein hormones subunit beta family. Heterodimer of an alpha and a beta chain.

The protein resides in the secreted. Its function is as follows. Involved in gametogenesis and steroidogenesis. In Trichopodus trichopterus (Three spot gourami), this protein is Gonadotropin subunit beta-2 (cgbb).